The following is a 2579-amino-acid chain: Ectopic P granules protein 5 homolog (2579 aa).

Disordered regions lie at residues 1-46 (MAEA…SREQ) and 92-132 (NEES…GTKV). Basic residues predominate over residues 7 to 23 (PQRRAKAKASRTKTKEK). The span at 24-34 (KKYETPQREES) shows a compositional bias: basic and acidic residues. Phosphothreonine is present on threonine 134. Residues 535 to 564 (PSERKPSSSGPGSGTWTLVDEGGEEDEDPE) are disordered. Residues 555-564 (EGGEEDEDPE) are compositionally biased toward acidic residues. Residues 1607–1633 (MHKNEAISQQLHVLRKEVKQLQAEAAK) are a coiled coil.

This sequence belongs to the EPG5 family. Interacts with RAN.

The protein localises to the cytoplasm. It localises to the perinuclear region. It is found in the lysosome. In terms of biological role, involved in autophagy. May play a role in a late step of autophagy, such as clearance of autophagosomal cargo. Plays a key role in innate and adaptive immune response triggered by unmethylated cytidine-phosphate-guanosine (CpG) dinucleotides from pathogens, and mediated by the nucleotide-sensing receptor TLR9. It is necessary for the translocation of CpG dinucleotides from early endosomes to late endosomes and lysosomes, where TLR9 is located. The sequence is that of Ectopic P granules protein 5 homolog (EPG5) from Homo sapiens (Human).